We begin with the raw amino-acid sequence, 29 residues long: RGCPRILMRCKRDSDCLAGCVCQKNGYCG.

Intrachain disulfides connect Cys-3/Cys-20, Cys-10/Cys-22, and Cys-16/Cys-28.

It belongs to the protease inhibitor I7 (squash-type serine protease inhibitor) family.

Its subcellular location is the secreted. Its function is as follows. Inhibits trypsin. The polypeptide is Trypsin inhibitor 2 (Bryonia dioica (Red bryony)).